Here is a 757-residue protein sequence, read N- to C-terminus: uncharacterized protein (757 aa).

This is an uncharacterized protein from Dictyostelium discoideum (Social amoeba).